Consider the following 62-residue polypeptide: Short neurotoxin A (62 aa).

Residues 1 to 16 (RRCFNHPSSQPQTNKS) show a composition bias toward polar residues. A disordered region spans residues 1-21 (RRCFNHPSSQPQTNKSCPPGE). 4 disulfides stabilise this stretch: Cys3–Cys24, Cys17–Cys41, Cys43–Cys54, and Cys55–Cys60.

The protein belongs to the three-finger toxin family. Short-chain subfamily. Type I alpha-neurotoxin sub-subfamily. In terms of tissue distribution, expressed by the venom gland.

It is found in the secreted. Its function is as follows. Binds to muscle nicotinic acetylcholine receptor (nAChR) and inhibit acetylcholine from binding to the receptor, thereby impairing neuromuscular transmission. The chain is Short neurotoxin A from Laticauda crockeri (Crocker's sea snake).